The sequence spans 269 residues: Formamidopyrimidine-DNA glycosylase (269 aa).

Proline 2 functions as the Schiff-base intermediate with DNA in the catalytic mechanism. The active-site Proton donor is the glutamate 3. The active-site Proton donor; for beta-elimination activity is lysine 57. DNA-binding residues include histidine 90, arginine 109, and lysine 150. The FPG-type zinc finger occupies 235–269 (QVYGRKGEPCRVCGTPIVATKHAQRATFYCRHCQK). The active-site Proton donor; for delta-elimination activity is arginine 259.

This sequence belongs to the FPG family. In terms of assembly, monomer. Requires Zn(2+) as cofactor.

The catalysed reaction is Hydrolysis of DNA containing ring-opened 7-methylguanine residues, releasing 2,6-diamino-4-hydroxy-5-(N-methyl)formamidopyrimidine.. It catalyses the reaction 2'-deoxyribonucleotide-(2'-deoxyribose 5'-phosphate)-2'-deoxyribonucleotide-DNA = a 3'-end 2'-deoxyribonucleotide-(2,3-dehydro-2,3-deoxyribose 5'-phosphate)-DNA + a 5'-end 5'-phospho-2'-deoxyribonucleoside-DNA + H(+). In terms of biological role, involved in base excision repair of DNA damaged by oxidation or by mutagenic agents. Acts as a DNA glycosylase that recognizes and removes damaged bases. Has a preference for oxidized purines, such as 7,8-dihydro-8-oxoguanine (8-oxoG). Has AP (apurinic/apyrimidinic) lyase activity and introduces nicks in the DNA strand. Cleaves the DNA backbone by beta-delta elimination to generate a single-strand break at the site of the removed base with both 3'- and 5'-phosphates. This chain is Formamidopyrimidine-DNA glycosylase, found in Salmonella newport (strain SL254).